The sequence spans 783 residues: DNA polymerase II (783 aa).

It belongs to the DNA polymerase type-B family.

It catalyses the reaction DNA(n) + a 2'-deoxyribonucleoside 5'-triphosphate = DNA(n+1) + diphosphate. Its activity is regulated as follows. DNA polymerase II activity is regulated by the lexA gene during the SOS response. Thought to be involved in DNA repair and/or mutagenesis. Its processivity is enhanced by the beta sliding clamp (dnaN) and clamp loader. This Escherichia coli (strain K12) protein is DNA polymerase II (polB).